A 480-amino-acid chain; its full sequence is MNFETVIGLEVHVELNTNSKIFSPTSAHFGNEQNTNTNVIDWSFPGVLPVLNKGVVDAGIKAALALNMDIHQHMHFDRKNYFYPDNPKAYQISQFDEPIGYNGWIEVQLEDGTTKKIGIERAHLEEDAGKNTHGTDGFSYVDLNRQGVPLIEIVSEADMRSPEEAYAYLTALKEVIQYTGISDVKMEEGSMRVDANISLRPYGQEEFGTKTELKNLNSFSNVRKGLEYEVQRQAKILRSGGVIRQETRRYDEASKSTILMRVKEGAADYRYFPEPDLPLFEISDEWIEEMRTELPEFPKDRRARYVAELGLSDYDANQLTATKVTSDFFEAAVALGGDAKQVSNWLQGEVAQFLNAEGKTLEEIQLTPENLVEMIAIIEDGTISSKIAKKVFVHLAKNGGGAREYVEKAGLVQISDPEVLIPIIHQVFADNEAAVADFKSGKRNADKAFTGFLMKATKGQANPQVALKLLAQELAKLKED.

This sequence belongs to the GatB/GatE family. GatB subfamily. As to quaternary structure, heterotrimer of A, B and C subunits.

The catalysed reaction is L-glutamyl-tRNA(Gln) + L-glutamine + ATP + H2O = L-glutaminyl-tRNA(Gln) + L-glutamate + ADP + phosphate + H(+). It catalyses the reaction L-aspartyl-tRNA(Asn) + L-glutamine + ATP + H2O = L-asparaginyl-tRNA(Asn) + L-glutamate + ADP + phosphate + 2 H(+). Its function is as follows. Allows the formation of correctly charged Asn-tRNA(Asn) or Gln-tRNA(Gln) through the transamidation of misacylated Asp-tRNA(Asn) or Glu-tRNA(Gln) in organisms which lack either or both of asparaginyl-tRNA or glutaminyl-tRNA synthetases. The reaction takes place in the presence of glutamine and ATP through an activated phospho-Asp-tRNA(Asn) or phospho-Glu-tRNA(Gln). The sequence is that of Aspartyl/glutamyl-tRNA(Asn/Gln) amidotransferase subunit B from Streptococcus thermophilus (strain ATCC BAA-250 / LMG 18311).